Consider the following 233-residue polypeptide: Uracil-DNA glycosylase (233 aa).

Asp70 acts as the Proton acceptor in catalysis.

This sequence belongs to the uracil-DNA glycosylase (UDG) superfamily. UNG family.

It localises to the cytoplasm. It catalyses the reaction Hydrolyzes single-stranded DNA or mismatched double-stranded DNA and polynucleotides, releasing free uracil.. Excises uracil residues from the DNA which can arise as a result of misincorporation of dUMP residues by DNA polymerase or due to deamination of cytosine. This Helicobacter pylori (strain Shi470) protein is Uracil-DNA glycosylase.